We begin with the raw amino-acid sequence, 749 residues long: RNA-binding protein 5-B (749 aa).

Residues 1-88 (MGSDKRVSRS…YHSDGDYMDH (88 aa)) form a disordered region. The RRM 1 domain maps to 102–182 (KTIMLRGLPI…KTIAMHYSNP (81 aa)). A RanBP2-type zinc finger spans residues 185–214 (KFEDWLCNKCGLYNFRRRLKCFRCGAAKAE). An RRM 2 domain is found at 241-325 (SAIILRNIGP…KTIGVDFAKS (85 aa)). 4 disordered regions span residues 425-471 (QMYQ…SVPD), 520-558 (PAAD…AQQI), 570-595 (NKQK…ESAA), and 626-680 (TEEE…NSNI). Low complexity predominate over residues 429–460 (QPGSPTQSGTSTAASTTPASTTSTEEATTPTA). 2 stretches are compositionally biased toward basic and acidic residues: residues 585–594 (SRDEERKESA) and 627–648 (EEEK…EKYG). Residues 677–723 (NSNIGNKMLQAMGWKEGSGLGRKSQGITAPIQAQVRMRGAGLGAKGS) form the G-patch domain.

This sequence belongs to the RBM5/RBM10 family. As to quaternary structure, component of the spliceosome A complex (also known as the prespliceosome). Appears to dissociate from the spliceosome upon formation of the spliceosome B complex (also known as the precatalytic spliceosome), in which the heterotrimeric U4/U6.U5 snRNPs are bound.

The protein localises to the nucleus. Functionally, component of the spliceosome A complex. Regulates alternative splicing of a number of mRNAs. May modulate splice site pairing after recruitment of the U1 and U2 snRNPs to the 5' and 3' splice sites of the intron. The sequence is that of RNA-binding protein 5-B (rbm5-b) from Xenopus laevis (African clawed frog).